A 352-amino-acid polypeptide reads, in one-letter code: Molybdenum import ATP-binding protein ModC (352 aa).

The 229-residue stretch at 1–229 folds into the ABC transporter domain; that stretch reads MLQLDFHQQL…SALRPWLPKD (229 aa). 31-38 is a binding site for ATP; sequence GVSGAGKT. The region spanning 289 to 352 is the Mop domain; it reads KSSIRNVLRA…AQIKSVSITA (64 aa).

Belongs to the ABC transporter superfamily. Molybdate importer (TC 3.A.1.8) family. The complex is composed of two ATP-binding proteins (ModC), two transmembrane proteins (ModB) and a solute-binding protein (ModA).

Its subcellular location is the cell inner membrane. The catalysed reaction is molybdate(out) + ATP + H2O = molybdate(in) + ADP + phosphate + H(+). Its function is as follows. Part of the ABC transporter complex ModABC involved in molybdenum import. Responsible for energy coupling to the transport system. The protein is Molybdenum import ATP-binding protein ModC of Pectobacterium atrosepticum (strain SCRI 1043 / ATCC BAA-672) (Erwinia carotovora subsp. atroseptica).